A 409-amino-acid polypeptide reads, in one-letter code: Putative integrase/recombinase y4rA (409 aa).

One can recognise a Core-binding (CB) domain in the interval 112–197 (SAVEQHVQAY…ALRSFLSYAR (86 aa)). In terms of domain architecture, Tyr recombinase spans 220-402 (SIPRAIGRDD…DLDALRTLAL (183 aa)). Active-site residues include Arg260, Lys284, His354, Arg357, and His380. The active-site O-(3'-phospho-DNA)-tyrosine intermediate is Tyr389.

The protein belongs to the 'phage' integrase family.

The sequence is that of Putative integrase/recombinase y4rA from Sinorhizobium fredii (strain NBRC 101917 / NGR234).